The primary structure comprises 290 residues: Shikimate dehydrogenase (NADP(+)) (290 aa).

Shikimate contacts are provided by residues 20–22 and threonine 67; that span reads SLS. The active-site Proton acceptor is lysine 71. Residues asparagine 92 and aspartate 107 each contribute to the shikimate site. NADP(+) contacts are provided by residues 132-136 and methionine 228; that span reads GAGGA. Residue tyrosine 230 coordinates shikimate. Glycine 251 is an NADP(+) binding site.

Belongs to the shikimate dehydrogenase family. In terms of assembly, homodimer.

It catalyses the reaction shikimate + NADP(+) = 3-dehydroshikimate + NADPH + H(+). It participates in metabolic intermediate biosynthesis; chorismate biosynthesis; chorismate from D-erythrose 4-phosphate and phosphoenolpyruvate: step 4/7. In terms of biological role, involved in the biosynthesis of the chorismate, which leads to the biosynthesis of aromatic amino acids. Catalyzes the reversible NADPH linked reduction of 3-dehydroshikimate (DHSA) to yield shikimate (SA). This chain is Shikimate dehydrogenase (NADP(+)), found in Geobacter sp. (strain M21).